Consider the following 124-residue polypeptide: UPF0102 protein HCH_05895 (124 aa).

Belongs to the UPF0102 family.

The polypeptide is UPF0102 protein HCH_05895 (Hahella chejuensis (strain KCTC 2396)).